Here is a 529-residue protein sequence, read N- to C-terminus: Putative inorganic phosphate cotransporter (529 aa).

8 helical membrane passes run 37 to 57 (FATR…AYVM), 110 to 130 (YILS…GILA), 148 to 168 (VFAF…LCAV), 202 to 222 (AVYA…GLLA), 232 to 252 (SIFY…LIFV), 338 to 358 (LPYL…DWMI), 429 to 449 (FLMS…PIAA), and 466 to 486 (IVFF…NIFG). The tract at residues 495-529 (NPEDDEQKPALQTTVTTSPARLSNGSTAPAAISSS) is disordered. A compositionally biased stretch (polar residues) spans 504–529 (ALQTTVTTSPARLSNGSTAPAAISSS).

Belongs to the major facilitator superfamily. Sodium/anion cotransporter family.

It localises to the membrane. Functionally, may be an inorganic phosphate cotransporter. The chain is Putative inorganic phosphate cotransporter (Picot) from Drosophila melanogaster (Fruit fly).